The following is a 105-amino-acid chain: Met repressor (105 aa).

Belongs to the MetJ family. Homodimer.

Its subcellular location is the cytoplasm. Its function is as follows. This regulatory protein, when combined with SAM (S-adenosylmethionine) represses the expression of the methionine regulon and of enzymes involved in SAM synthesis. The chain is Met repressor from Proteus mirabilis (strain HI4320).